The primary structure comprises 469 residues: Glutamate--tRNA ligase (469 aa).

Positions 9–19 (PSPTGFLHVGG) match the 'HIGH' region motif. 4 residues coordinate Zn(2+): C98, C100, C125, and D127. Residues 236-240 (KLSKR) carry the 'KMSKS' region motif. An ATP-binding site is contributed by K239.

This sequence belongs to the class-I aminoacyl-tRNA synthetase family. Glutamate--tRNA ligase type 1 subfamily. In terms of assembly, monomer. Requires Zn(2+) as cofactor.

It localises to the cytoplasm. It carries out the reaction tRNA(Glu) + L-glutamate + ATP = L-glutamyl-tRNA(Glu) + AMP + diphosphate. In terms of biological role, catalyzes the attachment of glutamate to tRNA(Glu) in a two-step reaction: glutamate is first activated by ATP to form Glu-AMP and then transferred to the acceptor end of tRNA(Glu). This Shewanella baltica (strain OS155 / ATCC BAA-1091) protein is Glutamate--tRNA ligase.